Reading from the N-terminus, the 436-residue chain is Lactonohydrolase oryL (436 aa).

An N-terminal signal peptide occupies residues 1-27 (MLSYTSHCLQALLGVASLPYRQYQAYS).

Belongs to the SMP-30/CGR1 family.

Its pathway is secondary metabolite biosynthesis. In terms of biological role, lactonohydrolase; part of the gene cluster that mediates the biosynthesis of oryzines, natural products with an unusual maleidride backbone. The two subunits of the fungal fatty acid synthase oryfasA and oryfasB probably form octenoic acid. This fatty acid is most likely activated by the acyl-CoA ligase oryP to give octenyl-CoA before the citrate synthase-like protein oryE catalyzes condensation with oxaloacetate to form tricarboxylic acid. The next steps of the pathways are conjectural, but a favorite possible route has been proposed, beginning with decarboxylation and concomitant dehydration by the decarboxylase oryM, followed by tautomerization, which may lead to the production of a diene intermediate. Reduction of this diene intermediate could give the known metabolite piliformic acid. On the pathway to oryzine B and oryzine A, however, hydroxylation of the diene by the alpha-ketoglutarate-dependent dioxygenase oryG and lactonisation by the lactonohydrolases oryH or oryL could give oryzine B directly. Finally, enoyl reduction by the dehydrogenase oryD would then convert oryzine B into oryzine A. The protein is Lactonohydrolase oryL of Aspergillus oryzae (strain ATCC 42149 / RIB 40) (Yellow koji mold).